The chain runs to 448 residues: MRAIIIGSGAAGLTTASTIRKYNKDMEIVVITKEKEIAYSPCAIPYVIEGAIKSFDDIIMHTPEDYKRERNIDILTETTVIDVDSKNNKIKCVDKDGNEFEMNYDYLVLATGAEPFIPPIEGKDLDGVFKVRTIEDGRAILKYIEENGCKKVAVVGAGAIGLEMAYGLKCRGLDVLVVEMAPQVLPRFLDPDMAEIVQKYLEKEGIKVMLSKPLEKIVGKEKVEAVYVDGKLYDVDMVIMATGVRPNIELAKKAGCKIGKFAIEVNEKMQTSIPNIYAVGDCVEVIDFITGEKTLSPFGTAAVRQGKVAGKNIAGVEAKFYPVLNSAVSKIGDLEIGGTGLTAFSANLKRIPIVIGRAKALTRARYYPGGKEIEIKMIFNEDGKVVGCQIVGGERVAERIDAMSIAIFKKVSAEELANMEFCYAPPVSMVHEPLSLAAEDALKKLSNK.

Residues 7 to 11 (GSGAA), cysteine 42, valine 80, 110 to 113 (ATGA), and arginine 132 contribute to the FAD site. Cysteine 42 serves as the catalytic Redox-active. Residues 152–167 (VAVV…MAYG), glutamate 179, and glycine 243 contribute to the NAD(+) site. FAD-binding positions include 271–281 (TSIPNIYAVGD), glycine 299, and threonine 300. Valine 328 is an NAD(+) binding site. Tyrosine 423 is an FAD binding site.

The protein belongs to the class-III pyridine nucleotide-disulfide oxidoreductase family. FAD is required as a cofactor.

The catalysed reaction is 2 NADH + O2 + 2 H(+) = 2 NAD(+) + 2 H2O. In terms of biological role, catalyzes the four-electron reduction of molecular oxygen to water. The protein is NADH oxidase of Methanocaldococcus jannaschii (strain ATCC 43067 / DSM 2661 / JAL-1 / JCM 10045 / NBRC 100440) (Methanococcus jannaschii).